Reading from the N-terminus, the 219-residue chain is Triosephosphate isomerase (219 aa).

Residue 6 to 8 (NYK) coordinates substrate. Residue histidine 90 is the Electrophile of the active site. Glutamate 138 serves as the catalytic Proton acceptor. Substrate-binding positions include isoleucine 143, glycine 178, and 199-200 (AS).

It belongs to the triosephosphate isomerase family. In terms of assembly, homotetramer; dimer of dimers.

It localises to the cytoplasm. It carries out the reaction D-glyceraldehyde 3-phosphate = dihydroxyacetone phosphate. Its pathway is carbohydrate biosynthesis; gluconeogenesis. It participates in carbohydrate degradation; glycolysis; D-glyceraldehyde 3-phosphate from glycerone phosphate: step 1/1. Involved in the gluconeogenesis. Catalyzes stereospecifically the conversion of dihydroxyacetone phosphate (DHAP) to D-glyceraldehyde-3-phosphate (G3P). The chain is Triosephosphate isomerase from Methanocaldococcus jannaschii (strain ATCC 43067 / DSM 2661 / JAL-1 / JCM 10045 / NBRC 100440) (Methanococcus jannaschii).